We begin with the raw amino-acid sequence, 37 residues long: Cytochrome b6-f complex subunit 5 (37 aa).

The chain crosses the membrane as a helical span at residues 5–25; it reads LLCGIVLGLIPITLAGLFVAA.

Belongs to the PetG family. The 4 large subunits of the cytochrome b6-f complex are cytochrome b6, subunit IV (17 kDa polypeptide, PetD), cytochrome f and the Rieske protein, while the 4 small subunits are PetG, PetL, PetM and PetN. The complex functions as a dimer.

Its subcellular location is the cellular thylakoid membrane. In terms of biological role, component of the cytochrome b6-f complex, which mediates electron transfer between photosystem II (PSII) and photosystem I (PSI), cyclic electron flow around PSI, and state transitions. PetG is required for either the stability or assembly of the cytochrome b6-f complex. This chain is Cytochrome b6-f complex subunit 5, found in Cyanothece sp. (strain PCC 7425 / ATCC 29141).